Here is a 384-residue protein sequence, read N- to C-terminus: Dimethyladenosine transferase (384 aa).

The tract at residues Met-1–Ser-24 is disordered. S-adenosyl-L-methionine-binding residues include His-39, Leu-41, Gly-66, Glu-87, Asp-115, and Asn-131. Residues Met-289–Asp-309 form a disordered region.

It belongs to the class I-like SAM-binding methyltransferase superfamily. rRNA adenine N(6)-methyltransferase family.

The protein resides in the cytoplasm. The protein localises to the nucleus. It is found in the nucleolus. It catalyses the reaction adenosine(1779)/adenosine(1780) in 18S rRNA + 4 S-adenosyl-L-methionine = N(6)-dimethyladenosine(1779)/N(6)-dimethyladenosine(1780) in 18S rRNA + 4 S-adenosyl-L-homocysteine + 4 H(+). Functionally, specifically dimethylates two adjacent adenosines in the loop of a conserved hairpin near the 3'-end of 18S rRNA in the 40S particle. The polypeptide is Dimethyladenosine transferase (DIM1) (Chaetomium thermophilum (strain DSM 1495 / CBS 144.50 / IMI 039719) (Thermochaetoides thermophila)).